We begin with the raw amino-acid sequence, 439 residues long: Probable eukaryotic translation initiation factor 5-1 (439 aa).

29–36 serves as a coordination point for GTP; sequence GRGNGIKT. Residues 143–245 are disordered; it reads LKNPPEQKKS…REAAEKRMKE (103 aa). The span at 147-186 shows a compositional bias: basic and acidic residues; that stretch reads PEQKKSSKDKKSMRRAEKERLREGEAADEEMRKLKKEAAS. The span at 214–228 shows a compositional bias: acidic residues; it reads DENDQADSEEDDDDV. Phosphothreonine is present on Thr-232. A compositionally biased stretch (basic and acidic residues) spans 234 to 245; sequence TSREAAEKRMKE. Residues 283 to 439 enclose the W2 domain; sequence KIPENAHEKL…QNAESESEEE (157 aa). A phosphoserine mark is found at Ser-434 and Ser-436.

The protein belongs to the eIF-2-beta/eIF-5 family.

Its function is as follows. Catalyzes the hydrolysis of GTP bound to the 40S ribosomal initiation complex (40S.mRNA.Met-tRNA[F].eIF-2.GTP) with the subsequent joining of a 60S ribosomal subunit resulting in the release of eIF-2 and the guanine nucleotide. The subsequent joining of a 60S ribosomal subunit results in the formation of a functional 80S initiation complex (80S.mRNA.Met-tRNA[F]). The protein is Probable eukaryotic translation initiation factor 5-1 of Arabidopsis thaliana (Mouse-ear cress).